The chain runs to 621 residues: 1-deoxy-D-xylulose-5-phosphate synthase (621 aa).

Residues His80 and 121–123 (GHS) each bind thiamine diphosphate. Residue Asp152 coordinates Mg(2+). Thiamine diphosphate is bound by residues 153-154 (GA), Asn181, Tyr288, and Glu370. Asn181 serves as a coordination point for Mg(2+).

This sequence belongs to the transketolase family. DXPS subfamily. As to quaternary structure, homodimer. It depends on Mg(2+) as a cofactor. Requires thiamine diphosphate as cofactor.

It catalyses the reaction D-glyceraldehyde 3-phosphate + pyruvate + H(+) = 1-deoxy-D-xylulose 5-phosphate + CO2. Its pathway is metabolic intermediate biosynthesis; 1-deoxy-D-xylulose 5-phosphate biosynthesis; 1-deoxy-D-xylulose 5-phosphate from D-glyceraldehyde 3-phosphate and pyruvate: step 1/1. Catalyzes the acyloin condensation reaction between C atoms 2 and 3 of pyruvate and glyceraldehyde 3-phosphate to yield 1-deoxy-D-xylulose-5-phosphate (DXP). This chain is 1-deoxy-D-xylulose-5-phosphate synthase, found in Vibrio vulnificus (strain CMCP6).